Reading from the N-terminus, the 173-residue chain is Photosystem I assembly protein Ycf3 (173 aa).

TPR repeat units follow at residues 35–68, 72–105, and 120–153; these read AYVYYRDGLSAQNDGDYAEALENYEESLKLEENA, GETLKNIAIIYMSNGEEERALETYQKALDENPKQ, and GRTAEEEGRRDDADGWFDQAANVWTQAVRLNPGG.

The protein belongs to the Ycf3 family.

It is found in the cellular thylakoid membrane. Essential for the assembly of the photosystem I (PSI) complex. May act as a chaperone-like factor to guide the assembly of the PSI subunits. The sequence is that of Photosystem I assembly protein Ycf3 from Synechococcus sp. (strain CC9311).